The following is a 332-amino-acid chain: Holliday junction branch migration complex subunit RuvB (332 aa).

Residues 1-182 form a large ATPase domain (RuvB-L) region; the sequence is MKLNKNSELK…FGLILKLNYY (182 aa). Residues L21, R22, G63, K66, T67, T68, 129–131, R172, Y182, and R219 each bind ATP; that span reads EDY. T67 lines the Mg(2+) pocket. Residues 183–253 are small ATPAse domain (RuvB-S); sequence SEDELELIIK…ISEIALEKLT (71 aa). The interval 256-332 is head domain (RuvB-H); sequence KNGLDDADYT…FKLFKNDKIK (77 aa). Positions 311 and 316 each coordinate DNA.

It belongs to the RuvB family. As to quaternary structure, homohexamer. Forms an RuvA(8)-RuvB(12)-Holliday junction (HJ) complex. HJ DNA is sandwiched between 2 RuvA tetramers; dsDNA enters through RuvA and exits via RuvB. An RuvB hexamer assembles on each DNA strand where it exits the tetramer. Each RuvB hexamer is contacted by two RuvA subunits (via domain III) on 2 adjacent RuvB subunits; this complex drives branch migration. In the full resolvosome a probable DNA-RuvA(4)-RuvB(12)-RuvC(2) complex forms which resolves the HJ.

It localises to the cytoplasm. It carries out the reaction ATP + H2O = ADP + phosphate + H(+). Its function is as follows. The RuvA-RuvB-RuvC complex processes Holliday junction (HJ) DNA during genetic recombination and DNA repair, while the RuvA-RuvB complex plays an important role in the rescue of blocked DNA replication forks via replication fork reversal (RFR). RuvA specifically binds to HJ cruciform DNA, conferring on it an open structure. The RuvB hexamer acts as an ATP-dependent pump, pulling dsDNA into and through the RuvAB complex. RuvB forms 2 homohexamers on either side of HJ DNA bound by 1 or 2 RuvA tetramers; 4 subunits per hexamer contact DNA at a time. Coordinated motions by a converter formed by DNA-disengaged RuvB subunits stimulates ATP hydrolysis and nucleotide exchange. Immobilization of the converter enables RuvB to convert the ATP-contained energy into a lever motion, pulling 2 nucleotides of DNA out of the RuvA tetramer per ATP hydrolyzed, thus driving DNA branch migration. The RuvB motors rotate together with the DNA substrate, which together with the progressing nucleotide cycle form the mechanistic basis for DNA recombination by continuous HJ branch migration. Branch migration allows RuvC to scan DNA until it finds its consensus sequence, where it cleaves and resolves cruciform DNA. The chain is Holliday junction branch migration complex subunit RuvB from Phytoplasma mali (strain AT).